The following is a 91-amino-acid chain: Elongation factor 1-beta (91 aa).

Belongs to the EF-1-beta/EF-1-delta family.

Promotes the exchange of GDP for GTP in EF-1-alpha/GDP, thus allowing the regeneration of EF-1-alpha/GTP that could then be used to form the ternary complex EF-1-alpha/GTP/AAtRNA. This chain is Elongation factor 1-beta (ef1b), found in Pyrococcus horikoshii (strain ATCC 700860 / DSM 12428 / JCM 9974 / NBRC 100139 / OT-3).